Here is a 269-residue protein sequence, read N- to C-terminus: Adenosylcobinamide-GDP ribazoletransferase (269 aa).

Helical transmembrane passes span 8 to 28 (QFNL…PTAI), 41 to 61 (YFPL…CFML), 70 to 90 (VCLL…DGLA), 114 to 136 (IGTY…LSSL), and 196 to 216 (VPAV…SACV).

The protein belongs to the CobS family. It depends on Mg(2+) as a cofactor.

The protein localises to the cell inner membrane. It catalyses the reaction alpha-ribazole + adenosylcob(III)inamide-GDP = adenosylcob(III)alamin + GMP + H(+). The catalysed reaction is alpha-ribazole 5'-phosphate + adenosylcob(III)inamide-GDP = adenosylcob(III)alamin 5'-phosphate + GMP + H(+). It functions in the pathway cofactor biosynthesis; adenosylcobalamin biosynthesis; adenosylcobalamin from cob(II)yrinate a,c-diamide: step 7/7. Its function is as follows. Joins adenosylcobinamide-GDP and alpha-ribazole to generate adenosylcobalamin (Ado-cobalamin). Also synthesizes adenosylcobalamin 5'-phosphate from adenosylcobinamide-GDP and alpha-ribazole 5'-phosphate. This is Adenosylcobinamide-GDP ribazoletransferase from Pseudoalteromonas atlantica (strain T6c / ATCC BAA-1087).